We begin with the raw amino-acid sequence, 118 residues long: Ribosome-binding factor A (118 aa).

This sequence belongs to the RbfA family. As to quaternary structure, monomer. Binds 30S ribosomal subunits, but not 50S ribosomal subunits or 70S ribosomes.

The protein localises to the cytoplasm. One of several proteins that assist in the late maturation steps of the functional core of the 30S ribosomal subunit. Associates with free 30S ribosomal subunits (but not with 30S subunits that are part of 70S ribosomes or polysomes). Required for efficient processing of 16S rRNA. May interact with the 5'-terminal helix region of 16S rRNA. In Bacillus thuringiensis (strain Al Hakam), this protein is Ribosome-binding factor A.